The chain runs to 102 residues: Small ribosomal subunit protein uS10 (102 aa).

The segment at 35–58 is disordered; that stretch reads SGPIPLPTKTLEIPSRKSPDGEGT.

The protein belongs to the universal ribosomal protein uS10 family. Part of the 30S ribosomal subunit.

Its function is as follows. Involved in the binding of tRNA to the ribosomes. The sequence is that of Small ribosomal subunit protein uS10 from Halorubrum lacusprofundi (strain ATCC 49239 / DSM 5036 / JCM 8891 / ACAM 34).